Reading from the N-terminus, the 242-residue chain is Glutamate transport ATP-binding protein GluA (242 aa).

In terms of domain architecture, ABC transporter spans I2–L236. G34–S41 contributes to the ATP binding site.

It belongs to the ABC transporter superfamily. As to quaternary structure, the complex is composed of two ATP-binding proteins (GluA), two transmembrane proteins (GluC and GluD) and a solute-binding protein (GluB).

Its subcellular location is the cell membrane. It carries out the reaction a polar amino acid(out) + ATP + H2O = a polar amino acid(in) + ADP + phosphate + H(+). The catalysed reaction is L-glutamate(out) + ATP + H2O = L-glutamate(in) + ADP + phosphate + H(+). Its function is as follows. Part of the ABC transporter complex GluABCD involved in glutamate uptake. Probably responsible for energy coupling to the transport system. This chain is Glutamate transport ATP-binding protein GluA, found in Corynebacterium glutamicum (strain ATCC 13032 / DSM 20300 / JCM 1318 / BCRC 11384 / CCUG 27702 / LMG 3730 / NBRC 12168 / NCIMB 10025 / NRRL B-2784 / 534).